The chain runs to 391 residues: MSLNPRDVVIVDFGRTPMGRSKGGMHRNTRAETMSAHLISKLLERNPKVDPAEVEDVIWGCVNQTLEQGWNIARMASLMTQIPHTSAAQTVSRLCGSSMSALHTAAQAIQTGNGDVFVIGGVEHMGHVGMMHGVDPNPHLSLYAAKASGMMGLTAEMLGKMHGISREAQDKFGARSHQLAWKATQEGKFKDEIIPMEGYDENGFLKVFDFDETIRPETTVETLAELKPAFNPKGGTVTAGTSSQITDGASCMIVMSAQRAQDLGIQPMAVIRSMAVAGVDPAIMGYGPVPSTNKALKRAGLTIADIDFVELNEAFAAQALPVLKDLKLLDKMDEKVNLHGGAIALGHPFGCSGARISGTLLNVMKQNGGTLGVSTMCVGLGQGITTVFERI.

Residue C95 is the Acyl-thioester intermediate of the active site. Catalysis depends on proton acceptor residues H347 and C377.

This sequence belongs to the thiolase-like superfamily. Thiolase family. Heterotetramer of two alpha chains (FadB) and two beta chains (FadA).

The protein localises to the cytoplasm. It catalyses the reaction an acyl-CoA + acetyl-CoA = a 3-oxoacyl-CoA + CoA. It functions in the pathway lipid metabolism; fatty acid beta-oxidation. Catalyzes the final step of fatty acid oxidation in which acetyl-CoA is released and the CoA ester of a fatty acid two carbons shorter is formed. The protein is 3-ketoacyl-CoA thiolase of Pseudomonas aeruginosa (strain ATCC 15692 / DSM 22644 / CIP 104116 / JCM 14847 / LMG 12228 / 1C / PRS 101 / PAO1).